Reading from the N-terminus, the 493-residue chain is Intermediate cleaving peptidase 55, mitochondrial (493 aa).

A mitochondrion-targeting transit peptide spans 1-19 (MQFLARNLVRRVSRTQVVS). Residues Asp-296, Asp-307, His-383, Glu-410, and Glu-433 each coordinate Mn(2+).

Belongs to the peptidase M24B family. Mn(2+) serves as cofactor.

The protein localises to the mitochondrion. It localises to the nucleus. Its function is as follows. Aminopeptidase which cleaves preprotein intermediates that carry destabilizing N-ter amino acid residues after the mitochondrial processing peptidase (MPP) cleavage site and is thus critical for stabilization of the mitochondrial proteome. The sequence is that of Intermediate cleaving peptidase 55, mitochondrial from Arabidopsis thaliana (Mouse-ear cress).